The primary structure comprises 334 residues: Holliday junction branch migration complex subunit RuvB (334 aa).

A large ATPase domain (RuvB-L) region spans residues 1–182 (MDERLVSSEL…FGVLSRLEYY (182 aa)). ATP contacts are provided by residues Leu-21, Arg-22, Gly-63, Lys-66, Thr-67, Thr-68, 129 to 131 (EDF), Arg-172, Tyr-182, and Arg-219. A Mg(2+)-binding site is contributed by Thr-67. The small ATPAse domain (RuvB-S) stretch occupies residues 183 to 253 (TRDELSEIVI…VAVDALERLQ (71 aa)). The interval 256–334 (KLGLDHIDRK…HFKMEVPNHD (79 aa)) is head domain (RuvB-H). The DNA site is built by Arg-311 and Arg-316.

This sequence belongs to the RuvB family. In terms of assembly, homohexamer. Forms an RuvA(8)-RuvB(12)-Holliday junction (HJ) complex. HJ DNA is sandwiched between 2 RuvA tetramers; dsDNA enters through RuvA and exits via RuvB. An RuvB hexamer assembles on each DNA strand where it exits the tetramer. Each RuvB hexamer is contacted by two RuvA subunits (via domain III) on 2 adjacent RuvB subunits; this complex drives branch migration. In the full resolvosome a probable DNA-RuvA(4)-RuvB(12)-RuvC(2) complex forms which resolves the HJ.

The protein localises to the cytoplasm. It catalyses the reaction ATP + H2O = ADP + phosphate + H(+). The RuvA-RuvB-RuvC complex processes Holliday junction (HJ) DNA during genetic recombination and DNA repair, while the RuvA-RuvB complex plays an important role in the rescue of blocked DNA replication forks via replication fork reversal (RFR). RuvA specifically binds to HJ cruciform DNA, conferring on it an open structure. The RuvB hexamer acts as an ATP-dependent pump, pulling dsDNA into and through the RuvAB complex. RuvB forms 2 homohexamers on either side of HJ DNA bound by 1 or 2 RuvA tetramers; 4 subunits per hexamer contact DNA at a time. Coordinated motions by a converter formed by DNA-disengaged RuvB subunits stimulates ATP hydrolysis and nucleotide exchange. Immobilization of the converter enables RuvB to convert the ATP-contained energy into a lever motion, pulling 2 nucleotides of DNA out of the RuvA tetramer per ATP hydrolyzed, thus driving DNA branch migration. The RuvB motors rotate together with the DNA substrate, which together with the progressing nucleotide cycle form the mechanistic basis for DNA recombination by continuous HJ branch migration. Branch migration allows RuvC to scan DNA until it finds its consensus sequence, where it cleaves and resolves cruciform DNA. This is Holliday junction branch migration complex subunit RuvB from Bacillus licheniformis (strain ATCC 14580 / DSM 13 / JCM 2505 / CCUG 7422 / NBRC 12200 / NCIMB 9375 / NCTC 10341 / NRRL NRS-1264 / Gibson 46).